We begin with the raw amino-acid sequence, 147 residues long: Succinate dehydrogenase assembly factor 2, mitochondrial (147 aa).

This sequence belongs to the SDHAF2 family. In terms of assembly, interacts with the flavoprotein subunit within the SDH catalytic dimer.

It is found in the mitochondrion matrix. Functionally, plays an essential role in the assembly of succinate dehydrogenase (SDH), an enzyme complex (also referred to as respiratory complex II) that is a component of both the tricarboxylic acid (TCA) cycle and the mitochondrial electron transport chain, and which couples the oxidation of succinate to fumarate with the reduction of ubiquinone (coenzyme Q) to ubiquinol. Required for flavinylation (covalent attachment of FAD) of the flavoprotein subunit of the SDH catalytic dimer. This Drosophila grimshawi (Hawaiian fruit fly) protein is Succinate dehydrogenase assembly factor 2, mitochondrial.